The chain runs to 132 residues: Global transcriptional regulator Spx (132 aa).

Cys-10 and Cys-13 are oxidised to a cystine.

This sequence belongs to the ArsC family. Spx subfamily. As to quaternary structure, interacts with the C-terminal domain of the alpha subunit of the RNAP.

The protein localises to the cytoplasm. Functionally, global transcriptional regulator that plays a key role in stress response and exerts either positive or negative regulation of genes. Acts by interacting with the C-terminal domain of the alpha subunit of the RNA polymerase (RNAP). This interaction can enhance binding of RNAP to the promoter region of target genes and stimulate their transcription, or block interaction of RNAP with activator. This is Global transcriptional regulator Spx from Lactiplantibacillus plantarum (strain ATCC BAA-793 / NCIMB 8826 / WCFS1) (Lactobacillus plantarum).